A 63-amino-acid polypeptide reads, in one-letter code: Large ribosomal subunit protein uL29 (63 aa).

This sequence belongs to the universal ribosomal protein uL29 family.

This chain is Large ribosomal subunit protein uL29, found in Shewanella oneidensis (strain ATCC 700550 / JCM 31522 / CIP 106686 / LMG 19005 / NCIMB 14063 / MR-1).